Here is an 87-residue protein sequence, read N- to C-terminus: MKTFETLFAELQDRAATRPEGSGTVAALDAGVHAQGKKVLEEAGEVWLAAEHESDESLAEEISQLLYWVQVLMVGRGLKLEDVYRHL.

This sequence belongs to the PRA-PH family.

It localises to the cytoplasm. It carries out the reaction 1-(5-phospho-beta-D-ribosyl)-ATP + H2O = 1-(5-phospho-beta-D-ribosyl)-5'-AMP + diphosphate + H(+). The protein operates within amino-acid biosynthesis; L-histidine biosynthesis; L-histidine from 5-phospho-alpha-D-ribose 1-diphosphate: step 2/9. The chain is Phosphoribosyl-ATP pyrophosphatase from Nocardia farcinica (strain IFM 10152).